Here is a 511-residue protein sequence, read N- to C-terminus: Glutamyl-tRNA(Gln) amidotransferase subunit B, mitochondrial (511 aa).

The transit peptide at 1–6 directs the protein to the mitochondrion; sequence MLRRYL.

This sequence belongs to the GatB/GatE family. GatB subfamily. As to quaternary structure, subunit of the heterotrimeric GatFAB amidotransferase (AdT) complex, composed of A, B and F subunits.

It is found in the mitochondrion. The catalysed reaction is L-glutamyl-tRNA(Gln) + L-glutamine + ATP + H2O = L-glutaminyl-tRNA(Gln) + L-glutamate + ADP + phosphate + H(+). Functionally, allows the formation of correctly charged Gln-tRNA(Gln) through the transamidation of misacylated Glu-tRNA(Gln) in the mitochondria. The reaction takes place in the presence of glutamine and ATP through an activated gamma-phospho-Glu-tRNA(Gln). The sequence is that of Glutamyl-tRNA(Gln) amidotransferase subunit B, mitochondrial from Lodderomyces elongisporus (strain ATCC 11503 / CBS 2605 / JCM 1781 / NBRC 1676 / NRRL YB-4239) (Yeast).